The primary structure comprises 603 residues: Class E vacuolar protein-sorting machinery protein hse1 (603 aa).

The VHS domain maps to 16–145 (ATDENLTSEN…KLKTQNPNLQ (130 aa)). 2 disordered regions span residues 140 to 164 (QNPNLQPPSKPGKREITEADRQKEE) and 177 to 212 (EKPSAAPEPKAEPSTSASVPASQTQAATSQAVPPGT). Basic and acidic residues predominate over residues 151–163 (GKREITEADRQKE). The UIM domain maps to 162–181 (KEEEELQMALALSIREKPSA). Positions 180–210 (SAAPEPKAEPSTSASVPASQTQAATSQAVPP) are enriched in low complexity. The SH3 domain occupies 215 to 274 (ATVSRVRALFDFQPSEPGELQFRKGDIIAVLESVYKDWWKGSLRGQTGIFPLNYVEKLPD). Positions 371 to 603 (HPAQPQYGRP…ANSNPNSYYR (233 aa)) are disordered. The span at 374–397 (QPQYGRPGQTPYGYPGPAAPLGYP) shows a compositional bias: low complexity. Residues 461–473 (TYDNPQELGTSVY) show a composition bias toward polar residues. Pro residues predominate over residues 487-497 (PYPPSGAPVPP). The segment covering 498–508 (GVHQQFQHQQQ) has biased composition (low complexity). Residues 540 to 561 (PPYPTAPVAHQPPPSHQPPPVP) are compositionally biased toward pro residues. The segment covering 586–603 (YNPSQAGAANSNPNSYYR) has biased composition (polar residues).

The protein belongs to the STAM family. In terms of assembly, component of the ESCRT-0 complex composed of HSE1 and VPS27.

It is found in the endosome membrane. Its function is as follows. Component of the ESCRT-0 complex which is the sorting receptor for ubiquitinated cargo proteins at the multivesicular body (MVB). This chain is Class E vacuolar protein-sorting machinery protein hse1 (hse1), found in Neosartorya fischeri (strain ATCC 1020 / DSM 3700 / CBS 544.65 / FGSC A1164 / JCM 1740 / NRRL 181 / WB 181) (Aspergillus fischerianus).